A 142-amino-acid chain; its full sequence is Transcription antitermination protein NusB (142 aa).

It belongs to the NusB family.

Its function is as follows. Involved in transcription antitermination. Required for transcription of ribosomal RNA (rRNA) genes. Binds specifically to the boxA antiterminator sequence of the ribosomal RNA (rrn) operons. The protein is Transcription antitermination protein NusB of Borreliella burgdorferi (strain ATCC 35210 / DSM 4680 / CIP 102532 / B31) (Borrelia burgdorferi).